The sequence spans 242 residues: Basic agglutinin (242 aa).

2 N-linked (GlcNAc...) asparagine glycosylation sites follow: Asn45 and Asn220.

The protein belongs to the leguminous lectin family.

Its function is as follows. Lectin. The chain is Basic agglutinin (WBAI) from Psophocarpus tetragonolobus (Winged bean).